The chain runs to 315 residues: Homoserine kinase (315 aa).

96–106 (PHSRGLGSSAA) is an ATP binding site.

This sequence belongs to the GHMP kinase family. Homoserine kinase subfamily.

The protein resides in the cytoplasm. The catalysed reaction is L-homoserine + ATP = O-phospho-L-homoserine + ADP + H(+). The protein operates within amino-acid biosynthesis; L-threonine biosynthesis; L-threonine from L-aspartate: step 4/5. Catalyzes the ATP-dependent phosphorylation of L-homoserine to L-homoserine phosphate. The chain is Homoserine kinase from Mycobacterium leprae (strain Br4923).